The following is a 137-amino-acid chain: Large ribosomal subunit protein uL16 (137 aa).

The protein belongs to the universal ribosomal protein uL16 family. As to quaternary structure, part of the 50S ribosomal subunit.

Binds 23S rRNA and is also seen to make contacts with the A and possibly P site tRNAs. This is Large ribosomal subunit protein uL16 from Azotobacter vinelandii (strain DJ / ATCC BAA-1303).